The following is a 329-amino-acid chain: Glycerol-3-phosphate dehydrogenase [NAD(P)+] (329 aa).

The NADPH site is built by Trp-15, His-35, and Lys-107. Sn-glycerol 3-phosphate-binding residues include Lys-107, Gly-135, and Ser-137. Ala-139 provides a ligand contact to NADPH. Positions 190, 243, 253, 254, and 255 each coordinate sn-glycerol 3-phosphate. Lys-190 serves as the catalytic Proton acceptor. Arg-254 provides a ligand contact to NADPH. NADPH-binding residues include Leu-276 and Glu-278.

Belongs to the NAD-dependent glycerol-3-phosphate dehydrogenase family.

Its subcellular location is the cytoplasm. It catalyses the reaction sn-glycerol 3-phosphate + NAD(+) = dihydroxyacetone phosphate + NADH + H(+). It carries out the reaction sn-glycerol 3-phosphate + NADP(+) = dihydroxyacetone phosphate + NADPH + H(+). It functions in the pathway membrane lipid metabolism; glycerophospholipid metabolism. Its function is as follows. Catalyzes the reduction of the glycolytic intermediate dihydroxyacetone phosphate (DHAP) to sn-glycerol 3-phosphate (G3P), the key precursor for phospholipid synthesis. This Rhodopseudomonas palustris (strain HaA2) protein is Glycerol-3-phosphate dehydrogenase [NAD(P)+].